The chain runs to 355 residues: MELDVFVGNTTVLDEDIYQLWLDGHSVSDVVRQRMDAGVLLECEASPDVLQSDTIDQFRTFQMCERLLQSPSKVANQLLFQIPSDQQAMLIERYYEFDSVFAREVLGKKLSKGTKKDLDDVSAKTGIALKSCRRQFDNFKRVFKVVEELKGPLVENIQRHFLLSDDLARDYATIVFFANSRFETGKRKLQYLSFQDFAFCAGQLISYWTVGAVDNMIEDMDVDLEKDFLHDLKDLKVLVNDKDLLDQHKSLVCGQLRGKIKVFNEMEASFKNLSRALVNIASKLTHAKDVRDLFIDLVEKFIEPCRSDKWTSGDLRLFLTHYSTSVHTLEAFRHQVIWDRYMGVIKSCILKMYHD.

Interacts with IER2.

The protein localises to the nucleus. The protein resides in the endomembrane system. Its function is as follows. Mediates with IER2 FGF-signaling in Kupffer's vesicle ciliogenesis and in the establishment of laterality in the embryo. May be involved in mitogenic function of FGF1. The polypeptide is Acidic fibroblast growth factor intracellular-binding protein B (Danio rerio (Zebrafish)).